The following is a 27-amino-acid chain: Peptide Cn29 (27 aa).

Cystine bridges form between C2/C23, C5/C18, and C12/C25.

As to expression, expressed by the venom gland.

It localises to the secreted. In Centruroides noxius (Mexican scorpion), this protein is Peptide Cn29.